A 570-amino-acid polypeptide reads, in one-letter code: Periplasmic trehalase (570 aa).

Residues 1 to 34 (MIPPEIRRSVLLQKAIKLALAGTLLTFASFSATA) form the signal peptide. Residues R159, 166–167 (WD), N203, 212–214 (RSQ), 284–286 (RPE), and G317 contribute to the substrate site. Catalysis depends on proton donor/acceptor residues D319 and E503. Substrate is bound at residue E518. Residues 544 to 570 (KPCDSVPSTRPASLSATPTKTPSAATQ) form a disordered region. A compositionally biased stretch (low complexity) spans 554 to 570 (PASLSATPTKTPSAATQ).

It belongs to the glycosyl hydrolase 37 family. As to quaternary structure, monomer.

The protein resides in the periplasm. The enzyme catalyses alpha,alpha-trehalose + H2O = alpha-D-glucose + beta-D-glucose. Provides the cells with the ability to utilize trehalose at high osmolarity by splitting it into glucose molecules that can subsequently be taken up by the phosphotransferase-mediated uptake system. The protein is Periplasmic trehalase of Salmonella schwarzengrund (strain CVM19633).